A 1060-amino-acid chain; its full sequence is Carbamoyl phosphate synthase large chain (1060 aa).

The tract at residues 1-401 (MPKRQDIHKI…SLLKAVRSLE (401 aa)) is carboxyphosphate synthetic domain. ATP-binding residues include Arg129, Arg169, Gly175, Gly176, Arg208, Ile210, Glu215, Gly241, Val242, His243, Gln284, and Glu298. In terms of domain architecture, ATP-grasp 1 spans 133–327 (KNLMQKLHEP…IAKMAAKIAV (195 aa)). Residues Gln284, Glu298, and Asn300 each coordinate Mg(2+). The Mn(2+) site is built by Gln284, Glu298, and Asn300. The segment at 402–546 (VGLIHPERPA…YSTYESSTES (145 aa)) is oligomerization domain. The carbamoyl phosphate synthetic domain stretch occupies residues 547 to 929 (VKSDKPSVLV…ALYKAFEAAG (383 aa)). An ATP-grasp 2 domain is found at 671-861 (DQVIKSLKLP…LAQVATLAIL (191 aa)). Residues Arg707, His746, Leu748, Glu752, Gly777, Ile778, His779, Ser780, Gln820, and Glu832 each coordinate ATP. The Mg(2+) site is built by Gln820, Glu832, and Asn834. Residues Gln820, Glu832, and Asn834 each coordinate Mn(2+). One can recognise an MGS-like domain in the interval 930–1060 (MHLPQFGRAL…QAFSISPIKS (131 aa)). The allosteric domain stretch occupies residues 930-1060 (MHLPQFGRAL…QAFSISPIKS (131 aa)).

The protein belongs to the CarB family. Composed of two chains; the small (or glutamine) chain promotes the hydrolysis of glutamine to ammonia, which is used by the large (or ammonia) chain to synthesize carbamoyl phosphate. Tetramer of heterodimers (alpha,beta)4. Mg(2+) serves as cofactor. Requires Mn(2+) as cofactor.

The catalysed reaction is hydrogencarbonate + L-glutamine + 2 ATP + H2O = carbamoyl phosphate + L-glutamate + 2 ADP + phosphate + 2 H(+). It catalyses the reaction hydrogencarbonate + NH4(+) + 2 ATP = carbamoyl phosphate + 2 ADP + phosphate + 2 H(+). The protein operates within amino-acid biosynthesis; L-arginine biosynthesis; carbamoyl phosphate from bicarbonate: step 1/1. It functions in the pathway pyrimidine metabolism; UMP biosynthesis via de novo pathway; (S)-dihydroorotate from bicarbonate: step 1/3. Its function is as follows. Large subunit of the glutamine-dependent carbamoyl phosphate synthetase (CPSase). CPSase catalyzes the formation of carbamoyl phosphate from the ammonia moiety of glutamine, carbonate, and phosphate donated by ATP, constituting the first step of 2 biosynthetic pathways, one leading to arginine and/or urea and the other to pyrimidine nucleotides. The large subunit (synthetase) binds the substrates ammonia (free or transferred from glutamine from the small subunit), hydrogencarbonate and ATP and carries out an ATP-coupled ligase reaction, activating hydrogencarbonate by forming carboxy phosphate which reacts with ammonia to form carbamoyl phosphate. The sequence is that of Carbamoyl phosphate synthase large chain from Lacticaseibacillus casei (strain BL23) (Lactobacillus casei).